The following is a 208-amino-acid chain: MERMNQSRKVPIHDAAEESSAEAHETQEAGNMEEQAREAEIQQEMAEEAVEQAQDAEEAQEEEAADYKDLYLRTLAEFENYRRRADRETNEFKKYANETLIKDIIPVIDNLERAMECTVNTDDPGCAQNLLAGVQMTEREILKVLEKYGVTRISAIGETFDPAYHQALMAEESDEHPDETVIREMQKGYLLKDRLIRPALVAVAKGKA.

Basic and acidic residues predominate over residues 1–27 (MERMNQSRKVPIHDAAEESSAEAHETQ). Residues 1 to 65 (MERMNQSRKV…AEEAQEEEAA (65 aa)) are disordered. A compositionally biased stretch (acidic residues) spans 45–64 (MAEEAVEQAQDAEEAQEEEA).

Belongs to the GrpE family. In terms of assembly, homodimer.

It is found in the cytoplasm. Participates actively in the response to hyperosmotic and heat shock by preventing the aggregation of stress-denatured proteins, in association with DnaK and GrpE. It is the nucleotide exchange factor for DnaK and may function as a thermosensor. Unfolded proteins bind initially to DnaJ; upon interaction with the DnaJ-bound protein, DnaK hydrolyzes its bound ATP, resulting in the formation of a stable complex. GrpE releases ADP from DnaK; ATP binding to DnaK triggers the release of the substrate protein, thus completing the reaction cycle. Several rounds of ATP-dependent interactions between DnaJ, DnaK and GrpE are required for fully efficient folding. In Desulfatibacillum aliphaticivorans, this protein is Protein GrpE.